A 303-amino-acid polypeptide reads, in one-letter code: MESALPSIFTLVIIAEFIIGNLSNGFIVLINCIDWVSKRELSSVDKLLIILAISRIGLIWEILVSWFLALHSLAIFVSGTGLRIMIFSWIVSNHFNLWLATILSIFYLLKIASFSSPAFLYLKRRVNKVILMILLGTLVFLFLNLIQINMLIKDWLDRYERNTTWNFSMSDFETFSVSVRFTMTMFSLTPFTVAFISFLLLVFSLQKHLQKMQLNYKGHRDPRTKVHTNALKIVISFLLFYASFFLSILISWISELYQNTVIYMLCETIGAFYPSSHSFLLILGNAKLRQAFLLVAAKVWAKR.

The Extracellular portion of the chain corresponds to Met1 to Ser7. A helical membrane pass occupies residues Ile8–Val28. Residues Leu29–Arg55 lie on the Cytoplasmic side of the membrane. Residues Ile56–Phe76 form a helical membrane-spanning segment. Residues Val77 to Met85 lie on the Extracellular side of the membrane. The chain crosses the membrane as a helical span at residues Ile86–Phe106. The Cytoplasmic segment spans residues Tyr107–Lys128. A helical membrane pass occupies residues Val129–Asn149. Over Met150–Thr184 the chain is Extracellular. Asn162 and Asn166 each carry an N-linked (GlcNAc...) asparagine glycan. A helical membrane pass occupies residues Met185–Leu205. The Cytoplasmic segment spans residues Gln206–Lys232. Residues Ile233–Ile253 form a helical membrane-spanning segment. The Extracellular portion of the chain corresponds to Ser254–Val261. A helical transmembrane segment spans residues Ile262 to Ile282. Over Leu283–Arg303 the chain is Cytoplasmic.

It belongs to the G-protein coupled receptor T2R family.

The protein resides in the membrane. In terms of biological role, receptor that may play a role in the perception of bitterness and is gustducin-linked. May play a role in sensing the chemical composition of the gastrointestinal content. The activity of this receptor may stimulate alpha gustducin, mediate PLC-beta-2 activation and lead to the gating of TRPM5. This is Taste receptor type 2 member 13 (TAS2R13) from Pan paniscus (Pygmy chimpanzee).